A 181-amino-acid polypeptide reads, in one-letter code: Cytochrome b6-f complex iron-sulfur subunit (181 aa).

The segment at 1 to 35 is disordered; the sequence is MAQTGNFKSPARMSSLGQGAAPASAGAVTGGKPRE. Helical transmembrane passes span 53 to 73 and 114 to 134; these read VGGV…RYIV and GGSL…VHWD. In terms of domain architecture, Rieske spans 85–178; it reads LAVGPASDVP…VKIEDGKIVV (94 aa). [2Fe-2S] cluster contacts are provided by cysteine 124, histidine 126, cysteine 142, and histidine 145. The cysteines at positions 129 and 144 are disulfide-linked.

The protein belongs to the Rieske iron-sulfur protein family. It depends on [2Fe-2S] cluster as a cofactor.

The protein resides in the cell inner membrane. The catalysed reaction is 2 oxidized [plastocyanin] + a plastoquinol + 2 H(+)(in) = 2 reduced [plastocyanin] + a plastoquinone + 4 H(+)(out). Functionally, component of the green S-bacteria bc-complex which consists of the Rieske protein and cytochrome b subunit and which appears to lack a cytochrome c1-equivalent. This complex has a comparatively low redox potential. In Chlorobaculum tepidum (strain ATCC 49652 / DSM 12025 / NBRC 103806 / TLS) (Chlorobium tepidum), this protein is Cytochrome b6-f complex iron-sulfur subunit (petC).